Reading from the N-terminus, the 406-residue chain is WD repeat and SOCS box-containing protein 2 (406 aa).

A disordered region spans residues 70–89 (AKSRSSKNETKGRGSPKEKT). 5 WD repeats span residues 107 to 150 (PPSK…LLLN), 153 to 193 (GHQD…KQIQ), 197 to 236 (GHLQ…LIRK), 239 to 278 (GHQS…RLRS), and 293 to 332 (VHIS…PIAF). Residues 358–406 (HVQFWTAPRVLSSLKHLCRKALRSFLTTYQVLALPIPKKMKEFLTYRTF) form the SOCS box domain.

Its pathway is protein modification; protein ubiquitination. May be a substrate-recognition component of a SCF-like ECS (Elongin-Cullin-SOCS-box protein) E3 ubiquitin ligase complex which mediates the ubiquitination and subsequent proteasomal degradation of target proteins. The sequence is that of WD repeat and SOCS box-containing protein 2 (WSB2) from Bos taurus (Bovine).